We begin with the raw amino-acid sequence, 506 residues long: Phase 2 flagellin (506 aa).

Belongs to the bacterial flagellin family.

Its subcellular location is the secreted. It localises to the bacterial flagellum. Its function is as follows. Flagellin is the subunit protein which polymerizes to form the filaments of bacterial flagella. This Salmonella typhimurium (strain LT2 / SGSC1412 / ATCC 700720) protein is Phase 2 flagellin (fljB).